The sequence spans 854 residues: N-terminal acetyltransferase A complex subunit NAT1 (854 aa).

At serine 2 the chain carries N-acetylserine. TPR repeat units follow at residues 20-53, 54-87, 91-124, 126-162, 241-274, 384-417, and 452-485; these read ENDQFLEALKLYEGKQYKKSLKLLDAILKKDGSH, VDSLALKGLDLYSVGEKDDAASYVANAIRKIEGA, PICCHVLGIYMRNTKEYKESIKWFTAALNNGSTN, QIYRDLATLQSQIGDFKNALVSRKKYWEAFLGYRANW, FGLLERKATIYMKLGQLKDASIVYRTLIKRNPDN, IWTNYYLSQHFLFLKDFPKAQEYIDAALDHTPTL, and RFINCKTVKYFLRANNIDKAVEVASLFTKNDDSV. The stretch at 623–667 forms a coiled coil; it reads LKRKSDSLDENSDEIQNNGQNSSSQKKKAKKEAAAMNKRKETEAK. Positions 626–668 are disordered; it reads KSDSLDENSDEIQNNGQNSSSQKKKAKKEAAAMNKRKETEAKS. Serine 674 bears the Phosphoserine mark. A TPR 8 repeat occupies 728 to 761; sequence ALCFASLNKFAKRFGTTSGLFGSMAIVLLHATRN.

As to quaternary structure, component of the N-terminal acetyltransferase A (NatA) complex, which is composed of ARD1, NAT1 and NAT5. Can self-associate. NAT1 associates with the nascent polypeptide chain and the ribosome. Post-translationally, the N-terminus is blocked.

The protein resides in the cytoplasm. Non-catalytic component of the NatA N-terminal acetyltransferase, which catalyzes acetylation of proteins beginning with Met-Ser, Met-Gly and Met-Ala. N-acetylation plays a role in normal eukaryotic translation and processing, protect against proteolytic degradation and protein turnover. NAT1 anchors ARD1 and NAT5 to the ribosome and may present the N termini of nascent polypeptides for acetylation. This chain is N-terminal acetyltransferase A complex subunit NAT1 (NAT1), found in Saccharomyces cerevisiae (strain ATCC 204508 / S288c) (Baker's yeast).